An 89-amino-acid chain; its full sequence is Small ribosomal subunit protein uS15 (89 aa).

Belongs to the universal ribosomal protein uS15 family. In terms of assembly, part of the 30S ribosomal subunit. Forms a bridge to the 50S subunit in the 70S ribosome, contacting the 23S rRNA.

Functionally, one of the primary rRNA binding proteins, it binds directly to 16S rRNA where it helps nucleate assembly of the platform of the 30S subunit by binding and bridging several RNA helices of the 16S rRNA. Forms an intersubunit bridge (bridge B4) with the 23S rRNA of the 50S subunit in the ribosome. The sequence is that of Small ribosomal subunit protein uS15 from Rhizobium meliloti (strain 1021) (Ensifer meliloti).